A 78-amino-acid polypeptide reads, in one-letter code: MGLLGELLLLPAAPLRGTAWVLRQVVAEAERQYYDPAAVQRELARLNELLEAGEIDEEEFDRREDELLDRLEKGPRQS.

It belongs to the gas vesicle GvpG family.

The protein resides in the gas vesicle. Its function is as follows. Might be a minor component of the gas vesicle involved in nucleating their formation. Gas vesicles are hollow, gas filled proteinaceous nanostructures found in some microorganisms. It is not clear what function gas vesicles perform in soil bacteria. The chain is Gas vesicle protein G from Streptomyces sp. (strain CB03234).